Here is a 156-residue protein sequence, read N- to C-terminus: Small ribosomal subunit protein uS7 (156 aa).

Belongs to the universal ribosomal protein uS7 family. Part of the 30S ribosomal subunit. Contacts proteins S9 and S11.

One of the primary rRNA binding proteins, it binds directly to 16S rRNA where it nucleates assembly of the head domain of the 30S subunit. Is located at the subunit interface close to the decoding center, probably blocks exit of the E-site tRNA. This chain is Small ribosomal subunit protein uS7, found in Tremblaya princeps.